Consider the following 282-residue polypeptide: Parvulin-like PPIase (282 aa).

The signal sequence occupies residues 1–20 (MKKLSVIFLSVSMLSGIAFA). A PpiC domain is found at 138 to 231 (KEQIKVAHIL…FGWHIIKVLE (94 aa)).

The protein belongs to the PpiC/parvulin rotamase family.

The protein localises to the cell outer membrane. The catalysed reaction is [protein]-peptidylproline (omega=180) = [protein]-peptidylproline (omega=0). The polypeptide is Parvulin-like PPIase (plp) (Rickettsia conorii (strain ATCC VR-613 / Malish 7)).